Here is a 439-residue protein sequence, read N- to C-terminus: 3beta-hydroxysteroid-dehydrogenase/decarboxylase isoform 1 (439 aa).

16–21 (GGRGFA) lines the NAD(+) pocket. N-linked (GlcNAc...) asparagine glycans are attached at residues N75 and N158. NAD(+)-binding residues include Y161 and K165. Catalysis depends on K165, which acts as the Proton donor. An N-linked (GlcNAc...) asparagine glycan is attached at N327. Positions 371–439 (VTETIQWKKQ…MKVFGSKKID (69 aa)) constitute a Reticulon; atypical domain. The next 2 helical transmembrane spans lie at 381–401 (TLIA…TTGS) and 405–425 (IITA…INGI).

It belongs to the 3-beta-HSD family.

Its subcellular location is the endoplasmic reticulum membrane. It catalyses the reaction a 3beta-hydroxysteroid-4alpha-carboxylate + NAD(+) = a 3-oxosteroid + CO2 + NADH. The enzyme catalyses 4alpha-carboxy-4beta,14alpha-dimethyl-9beta,19-cyclo-5alpha-ergost-24(24(1))-en-3beta-ol + NAD(+) = cycloeucalenone + CO2 + NADH. The protein operates within steroid biosynthesis; zymosterol biosynthesis; zymosterol from lanosterol: step 4/6. In terms of biological role, 3beta-hydroxysteroid-dehydrogenase/decarboxylase involved in sterol synthesis. Catalyzes the formation of 3-oxosteroids from 3beta-hydroxysteroids-4alpha-carboxylate. Involved in the regulation of inflorescence internodes and leaves growth, probably by affecting auxin transporter activity possibly by altering sterol composition in the membranes. This is 3beta-hydroxysteroid-dehydrogenase/decarboxylase isoform 1 from Arabidopsis thaliana (Mouse-ear cress).